Reading from the N-terminus, the 626-residue chain is Myelin-associated glycoprotein (626 aa).

A signal peptide spans 1–19; the sequence is MIFLTTLPLFWIMISASRG. Positions 20-325 are interaction with RTN4R and RTN4RL2; it reads GHWGAWMPSS…RTVELSVMYA (306 aa). Topologically, residues 20–516 are extracellular; that stretch reads GHWGAWMPSS…HRLMWAKIGP (497 aa). The Ig-like V-type domain maps to 22–120; the sequence is WGAWMPSSIS…LGGKYYFRGD (99 aa). 3 disulfides stabilise this stretch: C37/C165, C42/C100, and C159/C217. An a ganglioside GT1b (d18:1(4E))-binding site is contributed by 65 to 67; that stretch reads YPK. N99 carries an N-linked (GlcNAc...) asparagine glycan. A ganglioside GT1b (d18:1(4E))-binding positions include R118 and 124–128; that span reads YNQYT. 4 Ig-like C2-type domains span residues 139–237, 241–325, 327–412, and 413–508; these read NTPN…LDVK, VIVE…VMYA, WKPT…VEFA, and PIIL…GAHR. N-linked (GlcNAc...) asparagine glycosylation is found at N223 and N246. An intrachain disulfide couples C261 to C305. Residues N315 and N332 are each glycosylated (N-linked (GlcNAc...) asparagine). Cysteines 347 and 392 form a disulfide. The N-linked (GlcNAc...) asparagine glycan is linked to N406. 2 disulfides stabilise this stretch: C421-C430 and C432-C488. N-linked (GlcNAc...) asparagine glycans are attached at residues N450 and N454. Residues 517-536 traverse the membrane as a helical segment; that stretch reads VGAVVAFAILIAIVCYITQT. The S-palmitoyl cysteine moiety is linked to residue C531. Residues 537–626 are Cytoplasmic-facing; that stretch reads RRKKNVTESP…LAEYAEIRVK (90 aa). Phosphoserine is present on residues S545, S547, and S549. Residues 577–626 are required for normal axon myelination in the central nervous system; it reads LGSERRLLGLRGEPPELDLSYSHSDLGKRPTKDSYTLTEELAEYAEIRVK. Positions 581–608 are disordered; the sequence is RRLLGLRGEPPELDLSYSHSDLGKRPTK.

Belongs to the immunoglobulin superfamily. SIGLEC (sialic acid binding Ig-like lectin) family. In terms of assembly, monomer and homodimer. Interacts (via the first three N-terminal Ig-like domains) with RTN4R and RTN4RL2. Interacts with isoform 2 of BSG. In terms of processing, N-glycosylated. Phosphorylated on tyrosine residues. Post-translationally, ubiquitinated, leading to proteasomal degradation. As to expression, detected in myelin. Detected in olfactory bulb and throughout the brain (at protein level). Detected in brain.

The protein localises to the cell membrane. Its subcellular location is the membrane raft. Functionally, adhesion molecule that mediates interactions between myelinating cells and neurons by binding to neuronal sialic acid-containing gangliosides and to the glycoproteins RTN4R and RTN4RL2. Not required for initial myelination, but seems to play a role in the maintenance of normal axon myelination. Protects motoneurons against apoptosis, also after injury; protection against apoptosis is probably mediated via interaction with neuronal RTN4R and RTN4RL2. Required to prevent degeneration of myelinated axons in adults; this probably depends on binding to gangliosides on the axon cell membrane. Negative regulator of neurite outgrowth; in dorsal root ganglion neurons the inhibition is mediated primarily via binding to neuronal RTN4R or RTN4RL2 and to a lesser degree via binding to neuronal gangliosides. In cerebellar granule cells the inhibition is mediated primarily via binding to neuronal gangliosides. In sensory neurons, inhibition of neurite extension depends only partially on RTN4R, RTN4RL2 and gangliosides. Inhibits axon longitudinal growth. Inhibits axon outgrowth by binding to RTN4R. Preferentially binds to alpha-2,3-linked sialic acid. Binds ganglioside Gt1b. The polypeptide is Myelin-associated glycoprotein (Mag) (Rattus norvegicus (Rat)).